We begin with the raw amino-acid sequence, 88 residues long: Small ribosomal subunit protein bS16 (88 aa).

It belongs to the bacterial ribosomal protein bS16 family.

The polypeptide is Small ribosomal subunit protein bS16 (Leptospira borgpetersenii serovar Hardjo-bovis (strain L550)).